Reading from the N-terminus, the 432-residue chain is Argininosuccinate lyase (432 aa).

It belongs to the lyase 1 family. Argininosuccinate lyase subfamily.

The protein resides in the cytoplasm. The catalysed reaction is 2-(N(omega)-L-arginino)succinate = fumarate + L-arginine. Its pathway is amino-acid biosynthesis; L-arginine biosynthesis; L-arginine from L-ornithine and carbamoyl phosphate: step 3/3. The polypeptide is Argininosuccinate lyase (Xanthomonas euvesicatoria pv. vesicatoria (strain 85-10) (Xanthomonas campestris pv. vesicatoria)).